We begin with the raw amino-acid sequence, 452 residues long: Na(+)/H(+) antiporter NhaA (452 aa).

A run of 11 helical transmembrane segments spans residues 27 to 47, 78 to 98, 114 to 134, 141 to 161, 172 to 192, 201 to 221, 222 to 242, 316 to 336, 346 to 366, 388 to 408, and 421 to 441; these read FLHI…TALI, LHFW…GMEI, ILPI…YLSF, IYGW…ILAL, IILL…IAFF, GLAI…ISFA, SAWL…VTGI, PWVA…VSFA, FLIV…GILA, ILLI…VSML, and IGVL…GLIY.

Belongs to the NhaA Na(+)/H(+) (TC 2.A.33) antiporter family.

The protein localises to the cell inner membrane. It carries out the reaction Na(+)(in) + 2 H(+)(out) = Na(+)(out) + 2 H(+)(in). Its function is as follows. Na(+)/H(+) antiporter that extrudes sodium in exchange for external protons. The chain is Na(+)/H(+) antiporter NhaA from Bartonella bacilliformis (strain ATCC 35685 / KC583 / Herrer 020/F12,63).